Reading from the N-terminus, the 544-residue chain is Terpene synthase 9 (544 aa).

Residues aspartate 296, aspartate 300, and glutamate 449 each contribute to the Mg(2+) site. Positions 296–300 (DDTFD) match the DDXXD motif motif.

Belongs to the terpene synthase family. Tpsa subfamily. The cofactor is Mg(2+). Requires Mn(2+) as cofactor.

It carries out the reaction (2E,6E)-farnesyl diphosphate = (1E,4E)-germacrene B + diphosphate. It catalyses the reaction (2E)-geranyl diphosphate = terpinolene + diphosphate. The enzyme catalyses (2E)-geranyl diphosphate = limonene + diphosphate. The catalysed reaction is (2E)-geranyl diphosphate = beta-myrcene + diphosphate. It carries out the reaction (2Z,6Z)-farnesyl diphosphate = germacrene A + diphosphate. It catalyses the reaction (2Z,6Z)-farnesyl diphosphate = alpha-humulene + diphosphate. It participates in secondary metabolite biosynthesis; terpenoid biosynthesis. Functionally, sesquiterpene synthase involved in the biosynthesis of volatile compounds. Mediates the conversion of (2E,6E)-farnesyl diphosphate (FPP) into (1E,4E)-germacrene B, but also smaller amounts of germacrene A and C, and of (2Z,6Z)-farnesyl diphosphate ((ZZ)-FPP) into alpha-humulene, germacrene A and germacrene B. Can act with a low efficiency as a monoterpene synthase with geranyl diphosphate (GPP) as substrate, thus producing beta-myrcene, limonene and terpinolene. This chain is Terpene synthase 9, found in Solanum habrochaites (Wild tomato).